The sequence spans 791 residues: MKTPKFITYVTRGFKGLESKSVENNKDHIVENSSPIASKFHEFDEQKKSFEIINYAGHEKFVDDITERESSVPGNAVYDITVRDIDAIVPVTDDVDIPASTFRMWILAFGLATVIAGVDAFFLMRYPSVSIAAIVALLVAYPLGQLWYYIIPQWEIKLPRGIRVSLNPGRFNRKEHACLYIFVNICVSAKLVNTLIIEQIKFFGVNIGIGRAILFNLCSYLSSFGWSGLALPILVYPPTLIWPSVLSSCALFKIFHDNDNTKACNWTISRLRYFFIVFVASFIWYWFPDLIFPALSSLGAWISWCKPSSAVLSQIFGVKTGLGLFPLTLDWAQISSLSNPLITPWWATCCIFTSFVFWIWIVLPGLYYQNYWQVAHFPIMTNSIYTVSGKSYDAQKVVDSKWELVTQKYQEYSPVMLPIAFIINIALSLGAFSSMMISFFLRFPTDVIQPICHVFKYSDIHTKLLKKYKRVHWGFYLASIIVSLGLGFAFTEGWHDIQIRSYGFVVSMVIGAALYIPLSLIESRSSFTISMQAFFEIVAAFWFNGQPMALLYFYSFGFGTLQHAMHMTQSAKIGHYMKVPPRLVAALLFTSGIWSSLVNSAVTGWIMYHVRDVCTSNAENNMTCRSPKTQFNSHLIWGLVGNHIFSSDGRYSFVMWFFLVGAVVSVVVYLLQISFPKSSWKHVNPALLLGGAAQIPSVTGINYSTWAAVAFCFNYLIRRGYYSWWKKYNLITAAAMDCGVAIAGLFIYFCVVYTGGSSNFSWWGTTVSSAGCDKKGCAHLSVSDISKPSGW.

The next 4 helical transmembrane spans lie at 104 to 124, 131 to 151, 177 to 197, and 226 to 246; these read MWIL…FFLM, IAAI…YYII, ACLY…TLII, and WSGL…PSVL. Residue asparagine 265 is glycosylated (N-linked (GlcNAc...) asparagine). 8 helical membrane-spanning segments follow: residues 274-294, 309-329, 346-366, 421-441, 471-491, 501-521, 533-553, and 583-603; these read FFIV…IFPA, SAVL…PLTL, WATC…LPGL, FIIN…SFFL, VHWG…FAFT, SYGF…LSLI, AFFE…LLYF, and LVAA…SAVT. The N-linked (GlcNAc...) asparagine glycan is linked to asparagine 621. The next 3 helical transmembrane spans lie at 653 to 673, 697 to 717, and 733 to 753; these read FVMW…LLQI, SVTG…NYLI, and AAAM…CVVY. Asparagine 759 carries an N-linked (GlcNAc...) asparagine glycan.

The protein belongs to the oligopeptide OPT transporter family.

The protein localises to the membrane. This is an uncharacterized protein from Schizosaccharomyces pombe (strain 972 / ATCC 24843) (Fission yeast).